The chain runs to 578 residues: Putative multidrug export ATP-binding/permease protein SAB1799c (578 aa).

The Cytoplasmic portion of the chain corresponds to 1-15; the sequence is MIKRYLQFVKPYKYR. Residues 16–36 traverse the membrane as a helical segment; sequence IFATIIVGIIKFGIPMLIPLL. One can recognise an ABC transmembrane type-1 domain in the interval 16–306; it reads IFATIIVGII…LVASFTTLTQ (291 aa). The Extracellular segment spans residues 37 to 59; it reads IKYAIDGVINNHALTTDEKVHHL. The helical transmembrane segment at 60–80 threads the bilayer; it reads TIAIGIALFIFVIVRPPIEFI. Residues 81–138 lie on the Cytoplasmic side of the membrane; the sequence is RQYLAQWTSNKILYDIRKKLYNHLQALSARFYANNQVGQVISRVINDVEQTKDFILTG. The helical transmembrane segment at 139–159 threads the bilayer; that stretch reads LMNIWLDCITIIIALSIMFFL. Residues 160–162 are Extracellular-facing; sequence DVK. The chain crosses the membrane as a helical span at residues 163–183; it reads LTLAALFIFPFYILTVYVFFG. At 184-242 the chain is on the cytoplasmic side; it reads RLRKLTRERSQALAEVQGFLHERVQGISVVKSFAIEDNEAKNFDKKNANFLTRALKHTR. Residues 243–262 form a helical membrane-spanning segment; it reads WNAYSFATINTVTDIGPIIV. Topologically, residues 263-267 are extracellular; that stretch reads IGVGA. Residues 268 to 287 traverse the membrane as a helical segment; it reads YLAISGSITVGTLAAFVGYL. At 288-578 the chain is on the cytoplasmic side; that stretch reads ELLFGPLRRL…YEHLYSIQNL (291 aa). Residues 340-575 enclose the ABC transporter domain; it reads IDIYHVNFQY…QGAYEHLYSI (236 aa). 374 to 381 serves as a coordination point for ATP; it reads GMSGGGKS.

The protein belongs to the ABC transporter superfamily. As to quaternary structure, homodimer.

Its subcellular location is the cell membrane. Functionally, may be involved in multidrug export. Transmembrane domains (TMD) form a pore in the cell membrane and the ATP-binding domain (NBD) is responsible for energy generation. This Staphylococcus aureus (strain bovine RF122 / ET3-1) protein is Putative multidrug export ATP-binding/permease protein SAB1799c.